We begin with the raw amino-acid sequence, 128 residues long: Large ribosomal subunit protein bL12 (128 aa).

The protein belongs to the bacterial ribosomal protein bL12 family. As to quaternary structure, homodimer. Part of the ribosomal stalk of the 50S ribosomal subunit. Forms a multimeric L10(L12)X complex, where L10 forms an elongated spine to which 2 to 4 L12 dimers bind in a sequential fashion. Binds GTP-bound translation factors.

Its function is as follows. Forms part of the ribosomal stalk which helps the ribosome interact with GTP-bound translation factors. Is thus essential for accurate translation. This is Large ribosomal subunit protein bL12 from Petrotoga mobilis (strain DSM 10674 / SJ95).